A 248-amino-acid polypeptide reads, in one-letter code: Triosephosphate isomerase B (248 aa).

The substrate site is built by asparagine 11 and lysine 13. Histidine 95 functions as the Electrophile in the catalytic mechanism. Residue glutamate 165 is the Proton acceptor of the active site.

This sequence belongs to the triosephosphate isomerase family. As to quaternary structure, homodimer.

Its subcellular location is the cytoplasm. The catalysed reaction is dihydroxyacetone phosphate = methylglyoxal + phosphate. It carries out the reaction D-glyceraldehyde 3-phosphate = dihydroxyacetone phosphate. Its pathway is carbohydrate degradation; glycolysis; D-glyceraldehyde 3-phosphate from glycerone phosphate: step 1/1. It functions in the pathway carbohydrate biosynthesis; gluconeogenesis. Its function is as follows. Triosephosphate isomerase is an extremely efficient metabolic enzyme that catalyzes the interconversion between dihydroxyacetone phosphate (DHAP) and D-glyceraldehyde-3-phosphate (G3P) in glycolysis and gluconeogenesis. In terms of biological role, it is also responsible for the non-negligible production of methylglyoxal a reactive cytotoxic side-product that modifies and can alter proteins, DNA and lipids. This is Triosephosphate isomerase B (tpi1b) from Danio rerio (Zebrafish).